A 49-amino-acid chain; its full sequence is Protein YdfW (49 aa).

Positions 16–49 (PKADHPWLTRRTQSHQQVKPPKLPKKKPDPDKKD) are disordered.

Functionally, may be involved in H(2) production during fermentative growth. This is Protein YdfW (ydfW) from Escherichia coli (strain K12).